A 197-amino-acid polypeptide reads, in one-letter code: Thymidine kinase (197 aa).

ATP contacts are provided by residues 9 to 16 and 83 to 86; these read AAMNAGKS and DESQ. Glutamate 84 serves as the catalytic Proton acceptor. Residues cysteine 141, cysteine 143, cysteine 178, and cysteine 181 each contribute to the Zn(2+) site.

It belongs to the thymidine kinase family. In terms of assembly, homotetramer.

It localises to the cytoplasm. It carries out the reaction thymidine + ATP = dTMP + ADP + H(+). The sequence is that of Thymidine kinase from Albidiferax ferrireducens (strain ATCC BAA-621 / DSM 15236 / T118) (Rhodoferax ferrireducens).